The sequence spans 242 residues: Probable transcriptional regulatory protein Cthe_2075 (242 aa).

The protein belongs to the TACO1 family.

Its subcellular location is the cytoplasm. This chain is Probable transcriptional regulatory protein Cthe_2075, found in Acetivibrio thermocellus (strain ATCC 27405 / DSM 1237 / JCM 9322 / NBRC 103400 / NCIMB 10682 / NRRL B-4536 / VPI 7372) (Clostridium thermocellum).